The chain runs to 492 residues: 5-taurinomethyluridine-[tRNA] synthase subunit GTPB3, mitochondrial (492 aa).

The N-terminal 20 residues, 1–20 (MWRGLWTLAAQAARGPRRLC), are a transit peptide targeting the mitochondrion. Positions 52, 112, and 152 each coordinate 5,10-methylenetetrahydrofolate. Positions 249–416 (GVHVVVTGPP…LLEALRKELA (168 aa)) constitute a TrmE-type G domain. Residues 256 to 263 (GPPNAGKS), 282 to 286 (GTTRD), 303 to 306 (DTAG), 374 to 377 (NKSD), and 397 to 399 (SCL) contribute to the GTP site. Asparagine 259 contributes to the K(+) binding site. Mg(2+)-binding residues include serine 263 and threonine 284. Residue lysine 492 participates in 5,10-methylenetetrahydrofolate binding.

It belongs to the TRAFAC class TrmE-Era-EngA-EngB-Septin-like GTPase superfamily. TrmE GTPase family. In terms of assembly, homodimer; forms a dimer in the presence of potassium. Interacts with MTO1; forms the GTPBP3-MTO1 complex composed of homodimers of GTPBP3 and MTO1. As to quaternary structure, homodimer, forms homodimer in vivo. The cofactor is K(+). Ubiquitously expressed.

It localises to the mitochondrion. The protein localises to the cytoplasm. It carries out the reaction GTP + H2O = GDP + phosphate + H(+). Functionally, GTPase component of the GTPBP3-MTO1 complex that catalyzes the 5-taurinomethyluridine (taum(5)U) modification at the 34th wobble position (U34) of mitochondrial tRNAs (mt-tRNAs), which plays a role in mt-tRNA decoding and mitochondrial translation. Taum(5)U formation on mammalian mt-tRNA requires the presence of both GTPBP3-mediated GTPase activity and MTO1 catalytic activity. This Homo sapiens (Human) protein is 5-taurinomethyluridine-[tRNA] synthase subunit GTPB3, mitochondrial.